We begin with the raw amino-acid sequence, 72 residues long: Translation initiation factor IF-1 (72 aa).

One can recognise an S1-like domain in the interval 1–72; that stretch reads MAKEDNIEMQ…SKGRIVFRSR (72 aa).

Belongs to the IF-1 family. In terms of assembly, component of the 30S ribosomal translation pre-initiation complex which assembles on the 30S ribosome in the order IF-2 and IF-3, IF-1 and N-formylmethionyl-tRNA(fMet); mRNA recruitment can occur at any time during PIC assembly.

Its subcellular location is the cytoplasm. One of the essential components for the initiation of protein synthesis. Stabilizes the binding of IF-2 and IF-3 on the 30S subunit to which N-formylmethionyl-tRNA(fMet) subsequently binds. Helps modulate mRNA selection, yielding the 30S pre-initiation complex (PIC). Upon addition of the 50S ribosomal subunit IF-1, IF-2 and IF-3 are released leaving the mature 70S translation initiation complex. The polypeptide is Translation initiation factor IF-1 (Klebsiella pneumoniae subsp. pneumoniae (strain ATCC 700721 / MGH 78578)).